Reading from the N-terminus, the 444-residue chain is Multidrug resistance protein MdtA (444 aa).

Positions 1-20 are cleaved as a signal peptide; it reads MKSQSKRTSRLFVFVGVVVA. Positions 37 to 52 are enriched in polar residues; that stretch reads NNTSGAQQSARGQDTS. Disordered regions lie at residues 37–60 and 399–444; these read NNTS…RNTP and PRSA…AEKS. Residues 409 to 419 are compositionally biased toward low complexity; that stretch reads ASAEKAAAEAE. Residues 435-444 show a composition bias toward polar residues; sequence ARSTTAAEKS.

Belongs to the membrane fusion protein (MFP) (TC 8.A.1) family. As to quaternary structure, part of a tripartite efflux system composed of MdtA, MdtB and MdtC.

The protein localises to the cell inner membrane. The polypeptide is Multidrug resistance protein MdtA (Yersinia pseudotuberculosis serotype I (strain IP32953)).